Reading from the N-terminus, the 449-residue chain is UNC93-like protein MFSD11 (449 aa).

Residues 8 to 28 (LFNIIILGVAFMFMFTAFQTC) form a helical membrane-spanning segment. Residue asparagine 40 is glycosylated (N-linked (GlcNAc...) asparagine). The next 5 membrane-spanning stretches (helical) occupy residues 53–73 (AIIY…VAIV), 74–94 (GPQL…AVFI), 96–116 (PFPW…AVLW), 138–158 (IFWA…YFAW), and 170–190 (RTVF…FFLI). Serine 204 is modified (phosphoserine). Transmembrane regions (helical) follow at residues 239–259 (MLLL…FSGV), 277–297 (LIGL…SLFG), 309–329 (PVVL…FLNM), 359–379 (FLLG…LGFL), 385–405 (APAF…AFFY), and 410–430 (LLHW…ISFF).

Belongs to the unc-93 family.

It is found in the membrane. This chain is UNC93-like protein MFSD11 (MFSD11), found in Macaca fascicularis (Crab-eating macaque).